A 182-amino-acid chain; its full sequence is MEIKFTIKQVVAVGIGAALFVVIGMINIPTPVPNTSIQLQYAVQALLSIIFGPIIGLLVGLIGHAIKDSLVGYGLWWTWIIASGLFGLVVGLFRKYVRVINGVFDWKDILIFNLIQLLANALVWGVLAPLGDVVIYQEAAEKVFAQGIVAGIANGVSVAIAGTLLLLAYAGTQTRAGSLKKD.

The next 5 helical transmembrane spans lie at Val-10 to Thr-30, Leu-46 to Ile-66, Tyr-73 to Phe-93, Ile-109 to Pro-129, and Ile-148 to Ala-168.

It belongs to the UPF0397 family.

The protein resides in the cell membrane. The polypeptide is UPF0397 protein SPT_0523 (Streptococcus pneumoniae (strain Taiwan19F-14)).